A 390-amino-acid polypeptide reads, in one-letter code: ATP phosphoribosyltransferase regulatory subunit (390 aa).

Belongs to the class-II aminoacyl-tRNA synthetase family. HisZ subfamily. As to quaternary structure, heteromultimer composed of HisG and HisZ subunits.

It localises to the cytoplasm. The protein operates within amino-acid biosynthesis; L-histidine biosynthesis; L-histidine from 5-phospho-alpha-D-ribose 1-diphosphate: step 1/9. In terms of biological role, required for the first step of histidine biosynthesis. May allow the feedback regulation of ATP phosphoribosyltransferase activity by histidine. This Nitrosomonas eutropha (strain DSM 101675 / C91 / Nm57) protein is ATP phosphoribosyltransferase regulatory subunit.